The following is a 163-amino-acid chain: SsrA-binding protein (163 aa).

The protein belongs to the SmpB family.

Its subcellular location is the cytoplasm. Its function is as follows. Required for rescue of stalled ribosomes mediated by trans-translation. Binds to transfer-messenger RNA (tmRNA), required for stable association of tmRNA with ribosomes. tmRNA and SmpB together mimic tRNA shape, replacing the anticodon stem-loop with SmpB. tmRNA is encoded by the ssrA gene; the 2 termini fold to resemble tRNA(Ala) and it encodes a 'tag peptide', a short internal open reading frame. During trans-translation Ala-aminoacylated tmRNA acts like a tRNA, entering the A-site of stalled ribosomes, displacing the stalled mRNA. The ribosome then switches to translate the ORF on the tmRNA; the nascent peptide is terminated with the 'tag peptide' encoded by the tmRNA and targeted for degradation. The ribosome is freed to recommence translation, which seems to be the essential function of trans-translation. The polypeptide is SsrA-binding protein (Buchnera aphidicola subsp. Schizaphis graminum (strain Sg)).